Consider the following 155-residue polypeptide: Cytochrome c-type biogenesis protein CcmE (155 aa).

At 1 to 8 (MNPLRKKR) the chain is on the cytoplasmic side. Residues 9–29 (LLIIVALLAGVGLAVTLALSA) traverse the membrane as a helical; Signal-anchor for type II membrane protein segment. The Periplasmic segment spans residues 30 to 155 (LQENINLFYT…AASPTPVKQG (126 aa)). His124 and Tyr128 together coordinate heme.

The protein belongs to the CcmE/CycJ family.

The protein resides in the cell inner membrane. Functionally, heme chaperone required for the biogenesis of c-type cytochromes. Transiently binds heme delivered by CcmC and transfers the heme to apo-cytochromes in a process facilitated by CcmF and CcmH. This is Cytochrome c-type biogenesis protein CcmE from Pseudomonas syringae pv. syringae (strain B728a).